We begin with the raw amino-acid sequence, 334 residues long: Putative transport protein MTH_1211 (334 aa).

A run of 8 helical transmembrane segments spans residues 24–44 (AIVV…AYIV), 60–80 (VSII…LVFT), 84–104 (IINS…PGAG), 131–151 (YVVA…VFLS), 189–209 (VLLS…LMAA), 220–240 (AILL…GPWA), 255–275 (ILRG…DIYL), and 289–309 (MIFL…GFIV).

It belongs to the autoinducer-2 exporter (AI-2E) (TC 2.A.86) family.

Its subcellular location is the cell membrane. The protein is Putative transport protein MTH_1211 of Methanothermobacter thermautotrophicus (strain ATCC 29096 / DSM 1053 / JCM 10044 / NBRC 100330 / Delta H) (Methanobacterium thermoautotrophicum).